A 387-amino-acid polypeptide reads, in one-letter code: Sulfopyruvate decarboxylase (387 aa).

It belongs to the TPP enzyme family. Requires thiamine diphosphate as cofactor.

The enzyme catalyses 3-sulfopyruvate + H(+) = sulfoacetaldehyde + CO2. Its pathway is cofactor biosynthesis; coenzyme M biosynthesis. Its function is as follows. Involved in the biosynthesis of the coenzyme M (2-mercaptoethanesulfonic acid). Catalyzes the decarboxylation of sulfopyruvate to sulfoacetaldehyde. Is not able to decarboxylate the analogous compounds 2-oxoglutarate or 2-oxosuberate. The sequence is that of Sulfopyruvate decarboxylase from Methanosarcina acetivorans (strain ATCC 35395 / DSM 2834 / JCM 12185 / C2A).